Reading from the N-terminus, the 642-residue chain is Protein INCREASED PETAL GROWTH ANISOTROPY 1 (642 aa).

Residues 1 to 60 are disordered; it reads MVAGKVRVTMGFHKSPSTKKTKDMPSPLPLPPPPPPPLKPPSSGSATTKPPINPSKPGFT. A compositionally biased stretch (pro residues) spans 26 to 40; that stretch reads SPLPLPPPPPPPLKP. The stretch at 80 to 183 forms a coiled coil; it reads AASHNGVVSE…EAEIVELRKL (104 aa). Residues 223-351 form a disordered region; the sequence is NLPEPITNQE…PPKSLSIASA (129 aa). The span at 247–256 shows a compositional bias: basic and acidic residues; that stretch reads DIYRKDEIES. Residues 258-277 show a composition bias toward low complexity; it reads SRSSNSEELTESSSLSTVRS. Residues 302–344 show a composition bias toward pro residues; the sequence is DPPPQKSIPPPPPPPPPPLLQQPPPPPSVSKAPPPPPPPPPPK.

The protein belongs to the IPGA1 family. Associates to cortical microtubules via its N-terminal region. Interacts with ANGUSTIFOLIA (AN) on microtubule upon mechanical stress to regulate microtubule organization. Binds to the microtubule-severing enzyme KATANIN (KTN1). As to expression, expressed ubiquitously at all development stages, with highest in developing petals. During mechanical stress, accumulates in granules on microtubules.

Its subcellular location is the cytoplasm. The protein localises to the cytoskeleton. It localises to the cytosol. The protein resides in the cell membrane. Functionally, microtubule-associated protein involved in the regulation of anisotropic petal and cotyledons growth and shape by affecting cortical microtubule organization. Prevents cortical microtubules organization into parallel arrays oriented perpendicular to the axis of cell elongation thus limiting anisotropic cell growth in the late phases of petal development. Cooperatively with ANGUSTIFOLIA (AN), negatively regulates cortical microtubules (CMTs) organization in response to mechanical stress and modulates pavement cells morphogenesis leading to puzzle shape, probably in an AAA1/KTN1-dependent manner. This chain is Protein INCREASED PETAL GROWTH ANISOTROPY 1, found in Arabidopsis thaliana (Mouse-ear cress).